The chain runs to 302 residues: Recombination-associated protein RdgC (302 aa).

The protein belongs to the RdgC family.

Its subcellular location is the cytoplasm. The protein localises to the nucleoid. Functionally, may be involved in recombination. The protein is Recombination-associated protein RdgC of Actinobacillus succinogenes (strain ATCC 55618 / DSM 22257 / CCUG 43843 / 130Z).